A 155-amino-acid chain; its full sequence is Regulatory protein RecX (155 aa).

Belongs to the RecX family.

The protein localises to the cytoplasm. Functionally, modulates RecA activity. In Pseudomonas entomophila (strain L48), this protein is Regulatory protein RecX.